Reading from the N-terminus, the 364-residue chain is mRNA decay activator protein ZFP36L2-B (364 aa).

Positions 102–111 are enriched in basic and acidic residues; that stretch reads SFSENGERSQ. The disordered stretch occupies residues 102–129; the sequence is SFSENGERSQHLLHLQQQQQQQKAGAQV. Residues 113 to 123 are compositionally biased toward low complexity; it reads LLHLQQQQQQQ. Positions 133–138 match the RNA-binding motif; sequence RYKTEL. C3H1-type zinc fingers lie at residues 133–161 and 171–199; these read RYKT…HGFH and KYKT…HNAE. The segment at 150–191 is RNA-binding; it reads YGEKCQFAHGFHELRSLTRHPKYKTELCRTFHTIGFCPYGPR. Positions 308–350 are disordered; it reads SESPVFDAPPSPPDSLSDRDSYLSGSLSSGSLSGSDSPTLDSN. A compositionally biased stretch (low complexity) spans 329–348; it reads YLSGSLSSGSLSGSDSPTLD.

Post-translationally, phosphorylated. In terms of tissue distribution, remains unlocalized in the egg and early embryo. From stage 21 (late neurula), expressed around the pronephros in the anterior crests, pharyngeal arch, hindbrain, mesodermal tissues around the pronephros and tail-bud. This expression pattern is maintained up to the tadpole stage.

It is found in the nucleus. Its subcellular location is the cytoplasm. Functionally, zinc-finger RNA-binding protein that destabilizes several cytoplasmic AU-rich element (ARE)-containing mRNA transcripts by promoting their poly(A) tail removal or deadenylation, and hence provide a mechanism for attenuating protein synthesis. Acts as a 3'-untranslated region (UTR) ARE mRNA-binding adapter protein to communicate signaling events to the mRNA decay machinery. Functions by recruiting the CCR4-NOT deadenylase complex and probably other components of the cytoplasmic RNA decay machinery to the bound ARE-containing mRNAs, and hence promotes ARE-mediated mRNA deadenylation and decay processes. Binds to 3'-UTR ARE of numerous mRNAs. Also induces the degradation of ARE-containing mRNAs even in absence of poly(A) tail. Required for tubulogenesis during pronephros development. The chain is mRNA decay activator protein ZFP36L2-B (zfp36l2-B) from Xenopus laevis (African clawed frog).